The chain runs to 91 residues: Probable Fe(2+)-trafficking protein (91 aa).

Belongs to the Fe(2+)-trafficking protein family.

Functionally, could be a mediator in iron transactions between iron acquisition and iron-requiring processes, such as synthesis and/or repair of Fe-S clusters in biosynthetic enzymes. In Shewanella amazonensis (strain ATCC BAA-1098 / SB2B), this protein is Probable Fe(2+)-trafficking protein.